A 512-amino-acid polypeptide reads, in one-letter code: 3-ketoacyl-CoA synthase 9 (512 aa).

A run of 2 helical transmembrane segments spans residues 44–64 (LITH…VTEI) and 83–103 (LVAF…YIMS). The 290-residue stretch at 100–389 (YIMSRPRSVY…FFMTLVTKKL (290 aa)) folds into the FAE domain. Catalysis depends on residues Cys-244, His-323, His-407, His-411, His-440, and Asn-444.

Belongs to the thiolase-like superfamily. Chalcone/stilbene synthases family. As to expression, expressed in seedlings, stems, leaves, flowers and siliques. Expressed in roots, leaves, and stems, including epidermis, silique walls, sepals, the upper portion of the styles, and seed coats, but not in developing embryos.

Its subcellular location is the endoplasmic reticulum membrane. It carries out the reaction a very-long-chain acyl-CoA + malonyl-CoA + H(+) = a very-long-chain 3-oxoacyl-CoA + CO2 + CoA. The protein operates within lipid metabolism; fatty acid biosynthesis. Involved in the elongation of C22 to C24 fatty acids, which are precursors for the biosynthesis of cuticular waxes, aliphatic suberins, and membrane lipids, including sphingolipids and phospholipids. The polypeptide is 3-ketoacyl-CoA synthase 9 (Arabidopsis thaliana (Mouse-ear cress)).